Reading from the N-terminus, the 88-residue chain is Phosphocarrier protein HPr (88 aa).

Positions 1–88 (MVVKTVRVLN…RLFQNKFEEE (88 aa)) constitute an HPr domain. The active-site Pros-phosphohistidine intermediate is His-15. Ser-46 bears the Phosphoserine; by HPrK/P mark.

The protein belongs to the HPr family.

It is found in the cytoplasm. Phosphorylation on Ser-46 inhibits the phosphoryl transfer from enzyme I to HPr. In terms of biological role, general (non sugar-specific) component of the phosphoenolpyruvate-dependent sugar phosphotransferase system (sugar PTS). This major carbohydrate active-transport system catalyzes the phosphorylation of incoming sugar substrates concomitantly with their translocation across the cell membrane. The phosphoryl group from phosphoenolpyruvate (PEP) is transferred to the phosphoryl carrier protein HPr by enzyme I. Phospho-HPr then transfers it to the PTS EIIA domain. The protein is Phosphocarrier protein HPr (ptsH) of Treponema pallidum (strain Nichols).